Reading from the N-terminus, the 334-residue chain is HTH-type transcriptional repressor PurR (334 aa).

Residues 2–56 (ATIKDVARMAGVSTTTVSHVINKTRFVAEATQKKVLAAVDDLNYAPSAVARSLKC) form the HTH lacI-type domain. A DNA-binding region (H-T-H motif) is located at residues 4 to 23 (IKDVARMAGVSTTTVSHVIN). The DNA-binding element occupies 48 to 56 (SAVARSLKC). Residues F73, K189, T191, F220, and D274 each contribute to the hypoxanthine site.

In terms of assembly, homodimer.

It functions in the pathway purine metabolism; purine nucleotide biosynthesis [regulation]. Its function is as follows. Is the main repressor of the genes involved in the de novo synthesis of purine nucleotides, regulating purB, purC, purEK, purF, purHD, purL, purMN and guaBA expression. PurR is allosterically activated to bind its cognate DNA by binding the purine corepressors, hypoxanthine or guanine, thereby effecting transcription repression. This is HTH-type transcriptional repressor PurR from Photobacterium profundum (strain SS9).